The sequence spans 313 residues: Tagatose-6-phosphate kinase (313 aa).

This sequence belongs to the carbohydrate kinase PfkB family. LacC subfamily.

The enzyme catalyses D-tagatofuranose 6-phosphate + ATP = D-tagatofuranose 1,6-bisphosphate + ADP + H(+). It participates in carbohydrate metabolism; D-tagatose 6-phosphate degradation; D-glyceraldehyde 3-phosphate and glycerone phosphate from D-tagatose 6-phosphate: step 1/2. This chain is Tagatose-6-phosphate kinase, found in Enterococcus faecalis (strain ATCC 700802 / V583).